A 1257-amino-acid chain; its full sequence is Period circadian protein homolog 2 (1257 aa).

Positions 1–60 (MNGYVDFSPSPTSPTKEPGAPQPTQAVLQEDVDMSSGSSGNENCSTGRDSQGSDCDDNGK) are disordered. Over residues 35–53 (SSGSSGNENCSTGRDSQGS) the composition is skewed to polar residues. The Nuclear export signal 1 motif lies at 109 to 118 (LIRTLKELKV). The PAS 1 domain maps to 179–246 (ITSEYIVKNA…FHSYTTPYKL (68 aa)). The LXXLL signature appears at 306 to 310 (LCCLL). The 67-residue stretch at 319–385 (YEAPRIPPEK…MLAIHKKILQ (67 aa)) folds into the PAS 2 domain. Residues 393-436 (YSPIRFRTRNGEYITLDTSWSSFINPWSRKISFIIGRHKVRVGP) form the PAC domain. A Nuclear export signal 2 motif is present at residues 460-469 (LTEQIHRLLM). Disordered stretches follow at residues 471–565 (PVPH…GASL) and 617–638 (PSRKATVSPGLHSGEAARPSKV). The tract at residues 478–482 (SGYGS) is important for protein stability. Polar residues predominate over residues 493–504 (MSQTSSSDSNGQ). The CSNK1E binding domain stretch occupies residues 510–709 (RRSGIFKTSG…GAAGGLSQEK (200 aa)). 5 positions are modified to phosphoserine: Ser-525, Ser-528, Ser-531, Ser-538, and Ser-544. Thr-554 bears the Phosphothreonine mark. Ser-659, Ser-693, Ser-697, Ser-706, Ser-758, and Ser-763 each carry phosphoserine. The interval 757–832 (RSRAQASDRG…SDTSQSSCPS (76 aa)) is disordered. Residues 778 to 794 (KKTGKNRKLKSKRVKTR) carry the Nuclear localization signal motif. Residues 779–792 (KTGKNRKLKSKRVK) are compositionally biased toward basic residues. A compositionally biased stretch (low complexity) spans 821–832 (SPSDTSQSSCPS). Thr-858 is subject to Phosphothreonine. Positions 882 to 1067 (EFAVQPLPFA…DLCSATGSAL (186 aa)) are interaction with PPARG. At Ser-939 the chain carries Phosphoserine. Phosphothreonine is present on Thr-964. Phosphoserine is present on Ser-971. Positions 983-990 (LQLNLLQL) match the Nuclear export signal 3 motif. A disordered region spans residues 994 to 1044 (PEGSTGAAGTLGTTGTAASGLDCTSGTSRDRQPKAPPTCNEPSDTQNSDAI). Low complexity predominate over residues 996–1014 (GSTGAAGTLGTTGTAASGL). A compositionally biased stretch (polar residues) spans 1033 to 1044 (NEPSDTQNSDAI). The LXXLL motif lies at 1051–1055 (LNLLL). A compositionally biased stretch (low complexity) spans 1070-1092 (SGASATSDSLGSSSLGFGTSQSG). The disordered stretch occupies residues 1070–1115 (SGASATSDSLGSSSLGFGTSQSGAGSSDTSHTSKYFGSIDSSENNH). The span at 1093 to 1111 (AGSSDTSHTSKYFGSIDSS) shows a compositional bias: polar residues. Ser-1126 is modified (phosphoserine). The tract at residues 1157–1257 (SRDLQAVLKE…LTGPRIEAQT (101 aa)) is CRY binding domain. Positions 1224–1257 (PYEEDSPSPGLCDTSEAKEEEGEQLTGPRIEAQT) are disordered.

As to quaternary structure, homodimer. Component of the circadian core oscillator, which includes the CRY proteins, CLOCK or NPAS2, BMAL1 or BMAL2, CSNK1D and/or CSNK1E, TIMELESS, and the PER proteins. Interacts with CLOCK-BMAL1 (off DNA). Interacts with BMAL2. Interacts directly with PER1 and PER3, and through a C-terminal domain, with CRY1 and CRY2. Interacts (via PAS 2 domain) with TIMELESS. Interacts with NFIL3. Different large complexes have been identified with different repressive functions. The core of PER complexes is composed of at least PER1, PER2, PER3, CRY1, CRY2, CSNK1D and/or CSNK1E. The large PER complex involved in the repression of transcriptional termination is composed of at least PER2, CDK9, DDX5, DHX9, NCBP1 and POLR2A (active). The large PER complex involved in the histone deacetylation is composed of at least HDAC1, PER2, SFPQ and SIN3A. The large PER complex involved in the histone methylation is composed of at least PER2, CBX3, TRIM28, SUV39H1 and/or SUV39H2; CBX3 mediates the formation of the complex. Interacts with SETX; the interaction inhibits termination of circadian target genes. Interacts with the nuclear receptors HNF4A, NR1D1, NR4A2, RORA, PPARA, PPARG and THRA; the interaction with at least PPARG is ligand dependent. Interacts with PML. Interacts (phosphorylated) with BTRC and FBXW11; the interactions trigger proteasomal degradation. Interacts with NONO and SFPQ. Interacts with CAVIN3. Interacts with MAGEL2. Interacts with MAP1LC3B. Interacts with HNF4A. Acetylated. Deacetylated by SIRT1, resulting in decreased protein stability. Deacetylated by SIRT6, preventing its degradation by the proteasome, resulting in increased protein stability. Post-translationally, phosphorylated by CSNK1E and CSNK1D. Phosphorylation results in PER2 protein degradation. May be dephosphorylated by PP1. In terms of processing, ubiquitinated, leading to its proteasomal degradation. Ubiquitination may be inhibited by CRY1. In terms of tissue distribution, in the brain, high expression in SCN during the subjective day. Constitutive expression in the cornu ammonis and in the dentate gyrus of the hippocampus. Also expressed in the piriform cortex and the glomeruli of the olfactory bulb, and at a lower extent in the cerebral cortex. Not expressed in the pars tuberalis and the Purkinje neurons. Also expressed in adipose tissue (white and brown), heart, kidney, bladder, lumbar spinal cord, skeletal muscle, spleen, lung, pancreas and liver with highest levels in skeletal muscle and liver and lowest levels in spleen.

The protein resides in the nucleus. Its subcellular location is the cytoplasm. It localises to the perinuclear region. Transcriptional repressor which forms a core component of the circadian clock. The circadian clock, an internal time-keeping system, regulates various physiological processes through the generation of approximately 24 hour circadian rhythms in gene expression, which are translated into rhythms in metabolism and behavior. It is derived from the Latin roots 'circa' (about) and 'diem' (day) and acts as an important regulator of a wide array of physiological functions including metabolism, sleep, body temperature, blood pressure, endocrine, immune, cardiovascular, and renal function. Consists of two major components: the central clock, residing in the suprachiasmatic nucleus (SCN) of the brain, and the peripheral clocks that are present in nearly every tissue and organ system. Both the central and peripheral clocks can be reset by environmental cues, also known as Zeitgebers (German for 'timegivers'). The predominant Zeitgeber for the central clock is light, which is sensed by retina and signals directly to the SCN. The central clock entrains the peripheral clocks through neuronal and hormonal signals, body temperature and feeding-related cues, aligning all clocks with the external light/dark cycle. Circadian rhythms allow an organism to achieve temporal homeostasis with its environment at the molecular level by regulating gene expression to create a peak of protein expression once every 24 hours to control when a particular physiological process is most active with respect to the solar day. Transcription and translation of core clock components (CLOCK, NPAS2, BMAL1, BMAL2, PER1, PER2, PER3, CRY1 and CRY2) plays a critical role in rhythm generation, whereas delays imposed by post-translational modifications (PTMs) are important for determining the period (tau) of the rhythms (tau refers to the period of a rhythm and is the length, in time, of one complete cycle). A diurnal rhythm is synchronized with the day/night cycle, while the ultradian and infradian rhythms have a period shorter and longer than 24 hours, respectively. Disruptions in the circadian rhythms contribute to the pathology of cardiovascular diseases, cancer, metabolic syndrome and aging. A transcription/translation feedback loop (TTFL) forms the core of the molecular circadian clock mechanism. Transcription factors, CLOCK or NPAS2 and BMAL1 or BMAL2, form the positive limb of the feedback loop, act in the form of a heterodimer and activate the transcription of core clock genes and clock-controlled genes (involved in key metabolic processes), harboring E-box elements (5'-CACGTG-3') within their promoters. The core clock genes: PER1/2/3 and CRY1/2 which are transcriptional repressors form the negative limb of the feedback loop and interact with the CLOCK|NPAS2-BMAL1|BMAL2 heterodimer inhibiting its activity and thereby negatively regulating their own expression. This heterodimer also activates nuclear receptors NR1D1/2 and RORA/B/G, which form a second feedback loop and which activate and repress BMAL1 transcription, respectively. PER1 and PER2 proteins transport CRY1 and CRY2 into the nucleus with appropriate circadian timing, but also contribute directly to repression of clock-controlled target genes through interaction with several classes of RNA-binding proteins, helicases and others transcriptional repressors. PER appears to regulate circadian control of transcription by at least three different modes. First, interacts directly with the CLOCK-BMAL1 at the tail end of the nascent transcript peak to recruit complexes containing the SIN3-HDAC that remodel chromatin to repress transcription. Second, brings H3K9 methyltransferases such as SUV39H1 and SUV39H2 to the E-box elements of the circadian target genes, like PER2 itself or PER1. The recruitment of each repressive modifier to the DNA seems to be very precisely temporally orchestrated by the large PER complex, the deacetylases acting before than the methyltransferases. Additionally, large PER complexes are also recruited to the target genes 3' termination site through interactions with RNA-binding proteins and helicases that may play a role in transcription termination to regulate transcription independently of CLOCK-BMAL1 interactions. Recruitment of large PER complexes to the elongating polymerase at PER and CRY termination sites inhibited SETX action, impeding RNA polymerase II release and thereby repressing transcriptional reinitiation. May propagate clock information to metabolic pathways via the interaction with nuclear receptors. Coactivator of PPARA and corepressor of NR1D1, binds rhythmically at the promoter of nuclear receptors target genes like BMAL1 or G6PC1. Directly and specifically represses PPARG proadipogenic activity by blocking PPARG recruitment to target promoters and thereby transcriptional activation. Required for fatty acid and lipid metabolism, is involved as well in the regulation of circulating insulin levels. Plays an important role in the maintenance of cardiovascular functions through the regulation of NO and vasodilatatory prostaglandins production in aortas. Controls circadian glutamate uptake in synaptic vesicles through the regulation of VGLUT1 expression. May also be involved in the regulation of inflammatory processes. Represses the CLOCK-BMAL1 induced transcription of BHLHE40/DEC1 and ATF4. Negatively regulates the formation of the TIMELESS-CRY1 complex by competing with TIMELESS for binding to CRY1. The chain is Period circadian protein homolog 2 (Per2) from Mus musculus (Mouse).